Consider the following 95-residue polypeptide: Aspartyl/glutamyl-tRNA(Asn/Gln) amidotransferase subunit C (95 aa).

It belongs to the GatC family. Heterotrimer of A, B and C subunits.

It carries out the reaction L-glutamyl-tRNA(Gln) + L-glutamine + ATP + H2O = L-glutaminyl-tRNA(Gln) + L-glutamate + ADP + phosphate + H(+). The catalysed reaction is L-aspartyl-tRNA(Asn) + L-glutamine + ATP + H2O = L-asparaginyl-tRNA(Asn) + L-glutamate + ADP + phosphate + 2 H(+). Functionally, allows the formation of correctly charged Asn-tRNA(Asn) or Gln-tRNA(Gln) through the transamidation of misacylated Asp-tRNA(Asn) or Glu-tRNA(Gln) in organisms which lack either or both of asparaginyl-tRNA or glutaminyl-tRNA synthetases. The reaction takes place in the presence of glutamine and ATP through an activated phospho-Asp-tRNA(Asn) or phospho-Glu-tRNA(Gln). This is Aspartyl/glutamyl-tRNA(Asn/Gln) amidotransferase subunit C from Nitratidesulfovibrio vulgaris (strain DSM 19637 / Miyazaki F) (Desulfovibrio vulgaris).